The sequence spans 504 residues: Maturase K (504 aa).

This sequence belongs to the intron maturase 2 family. MatK subfamily.

Its subcellular location is the plastid. The protein resides in the chloroplast. Usually encoded in the trnK tRNA gene intron. Probably assists in splicing its own and other chloroplast group II introns. This Vigna unguiculata (Cowpea) protein is Maturase K.